A 995-amino-acid chain; its full sequence is Endosome/lysosome-associated apoptosis and autophagy regulator family member 2 (995 aa).

The signal sequence occupies residues 1–21; it reads MGVFCWSGCLVISLQLLLGAA. At 22–895 the chain is on the extracellular side; sequence LDNLSTCKEE…ACESIDFWLK (874 aa). N-linked (GlcNAc...) asparagine glycosylation is found at asparagine 24, asparagine 136, asparagine 245, asparagine 372, asparagine 527, asparagine 649, asparagine 683, asparagine 700, and asparagine 758. Residues 639–843 enclose the MRH domain; it reads SECLVTYTNE…LWETAEACPL (205 aa). 2 cysteine pairs are disulfide-bonded: cysteine 641–cysteine 687 and cysteine 697–cysteine 725. 2 disulfide bridges follow: cysteine 793-cysteine 829 and cysteine 805-cysteine 841. N-linked (GlcNAc...) asparagine glycosylation occurs at asparagine 883. A helical transmembrane segment spans residues 896 to 916; sequence VGAGVGAFTAVLLIALTCYFW. Residues 917-995 are Cytoplasmic-facing; sequence KKNQKLEYKY…QLKSSRAQNI (79 aa).

It belongs to the ELAPOR family. In terms of tissue distribution, expressed in the animal half of the embryo during gastrulation, becoming restricted to the ventral ectoderm at stage 12.5. At the neurula stage, expressed in the anterior ectoderm surrounding the neural plate, and weakly in the epidermis. Expression is especially high in the presumptive hatching gland and cement gland regions. Surprisingly, by the tailbud stage (stage 22), expression is limited to the hatching gland and is not seen in the cement gland. Conversely, in tadpoles expressed broadly in the head, heart and fin. Expression in the head is seen in the primary mouth and in the brain, eyes, otic vesicles and olfactory pits.

Its subcellular location is the cell membrane. Functionally, functions as a regulator of the BMP signaling pathway and is involved in epidermal differentiation. The chain is Endosome/lysosome-associated apoptosis and autophagy regulator family member 2 (elapor2) from Xenopus laevis (African clawed frog).